The following is a 364-amino-acid chain: NADH-quinone oxidoreductase subunit H (364 aa).

8 consecutive transmembrane segments (helical) span residues 15–35 (LLVL…IAFL), 84–104 (AVFI…WAAI), 123–143 (VGVL…IMGG), 169–189 (IGFV…TTIV), 206–226 (YFPL…SALA), 257–277 (LFML…TILF), 302–322 (LSGL…FALV), and 341–361 (IFLP…TFVG).

It belongs to the complex I subunit 1 family. As to quaternary structure, NDH-1 is composed of 14 different subunits. Subunits NuoA, H, J, K, L, M, N constitute the membrane sector of the complex.

It is found in the cell inner membrane. The enzyme catalyses a quinone + NADH + 5 H(+)(in) = a quinol + NAD(+) + 4 H(+)(out). Its function is as follows. NDH-1 shuttles electrons from NADH, via FMN and iron-sulfur (Fe-S) centers, to quinones in the respiratory chain. The immediate electron acceptor for the enzyme in this species is believed to be ubiquinone. Couples the redox reaction to proton translocation (for every two electrons transferred, four hydrogen ions are translocated across the cytoplasmic membrane), and thus conserves the redox energy in a proton gradient. This subunit may bind ubiquinone. The polypeptide is NADH-quinone oxidoreductase subunit H (Hyphomonas neptunium (strain ATCC 15444)).